The primary structure comprises 204 residues: dITP/XTP pyrophosphatase (204 aa).

8 to 13 (SNNAHK) contacts substrate. 2 residues coordinate Mg(2+): glutamate 41 and aspartate 76. Aspartate 76 functions as the Proton acceptor in the catalytic mechanism. Residues serine 77, 159–162 (FGYD), lysine 182, and 187–188 (HR) contribute to the substrate site.

The protein belongs to the HAM1 NTPase family. As to quaternary structure, homodimer. The cofactor is Mg(2+).

It carries out the reaction XTP + H2O = XMP + diphosphate + H(+). The catalysed reaction is dITP + H2O = dIMP + diphosphate + H(+). It catalyses the reaction ITP + H2O = IMP + diphosphate + H(+). Functionally, pyrophosphatase that catalyzes the hydrolysis of nucleoside triphosphates to their monophosphate derivatives, with a high preference for the non-canonical purine nucleotides XTP (xanthosine triphosphate), dITP (deoxyinosine triphosphate) and ITP. Seems to function as a house-cleaning enzyme that removes non-canonical purine nucleotides from the nucleotide pool, thus preventing their incorporation into DNA/RNA and avoiding chromosomal lesions. The protein is dITP/XTP pyrophosphatase of Clostridium perfringens (strain 13 / Type A).